Reading from the N-terminus, the 117-residue chain is Immunoglobulin heavy variable 1-45 (117 aa).

The first 19 residues, 1 to 19, serve as a signal peptide directing secretion; it reads MDWTWRILFLVAAVTDAYS. The tract at residues 20 to 44 is framework-1; the sequence is QMQLVQSGAEVKKTGSSVKVSCKAS. Residues 20 to 117 form the Ig-like domain; it reads QMQLVQSGAE…EDTAMYYCAR (98 aa). Cysteine 41 and cysteine 115 form a disulfide bridge. The complementarity-determining-1 stretch occupies residues 45 to 52; it reads GYTFTYRY. The interval 53 to 69 is framework-2; the sequence is LHWVRQAPGQALEWMGW. Positions 70–77 are complementarity-determining-2; sequence ITPFNGNT. Positions 78–115 are framework-3; the sequence is NYAQKFQDRVTITRDRSMSTAYMELSSLRSEDTAMYYC. A complementarity-determining-3 region spans residues 116 to 117; sequence AR.

Immunoglobulins are composed of two identical heavy chains and two identical light chains; disulfide-linked.

Its subcellular location is the secreted. It is found in the cell membrane. Its function is as follows. V region of the variable domain of immunoglobulin heavy chains that participates in the antigen recognition. Immunoglobulins, also known as antibodies, are membrane-bound or secreted glycoproteins produced by B lymphocytes. In the recognition phase of humoral immunity, the membrane-bound immunoglobulins serve as receptors which, upon binding of a specific antigen, trigger the clonal expansion and differentiation of B lymphocytes into immunoglobulins-secreting plasma cells. Secreted immunoglobulins mediate the effector phase of humoral immunity, which results in the elimination of bound antigens. The antigen binding site is formed by the variable domain of one heavy chain, together with that of its associated light chain. Thus, each immunoglobulin has two antigen binding sites with remarkable affinity for a particular antigen. The variable domains are assembled by a process called V-(D)-J rearrangement and can then be subjected to somatic hypermutations which, after exposure to antigen and selection, allow affinity maturation for a particular antigen. The protein is Immunoglobulin heavy variable 1-45 of Homo sapiens (Human).